The sequence spans 214 residues: Adenylate kinase (214 aa).

10-15 serves as a coordination point for ATP; it reads GAGKGT. The tract at residues 30–59 is NMP; the sequence is STGDMLRAAIKAGTELGKQAKAVIDAGQLV. Residues Thr31, Arg36, 57–59, 85–88, and Gln92 each bind AMP; these read QLV and GFPR. The interval 122 to 159 is LID; that stretch reads GRRAHLPSGRTYHVVYNPPKVEGKDDVTGEDLVVRDDD. Residues Arg123 and 132–133 contribute to the ATP site; that span reads TY. 2 residues coordinate AMP: Arg156 and Arg167. Lys200 provides a ligand contact to ATP.

It belongs to the adenylate kinase family. Monomer.

The protein resides in the cytoplasm. It catalyses the reaction AMP + ATP = 2 ADP. Its pathway is purine metabolism; AMP biosynthesis via salvage pathway; AMP from ADP: step 1/1. Functionally, catalyzes the reversible transfer of the terminal phosphate group between ATP and AMP. Plays an important role in cellular energy homeostasis and in adenine nucleotide metabolism. This Vibrio campbellii (strain ATCC BAA-1116) protein is Adenylate kinase.